We begin with the raw amino-acid sequence, 198 residues long: tRNA (cytidine(56)-2'-O)-methyltransferase (198 aa).

S-adenosyl-L-methionine-binding positions include L81, 110-114 (GAEKV), and 128-135 (IGNQPHSE). Residues 178-198 (DAKQAEASGEGASRKNGQLPS) form a disordered region.

This sequence belongs to the aTrm56 family. In terms of assembly, homodimer.

It localises to the cytoplasm. The enzyme catalyses cytidine(56) in tRNA + S-adenosyl-L-methionine = 2'-O-methylcytidine(56) in tRNA + S-adenosyl-L-homocysteine + H(+). Functionally, specifically catalyzes the AdoMet-dependent 2'-O-ribose methylation of cytidine at position 56 in tRNAs. The sequence is that of tRNA (cytidine(56)-2'-O)-methyltransferase from Pyrococcus abyssi (strain GE5 / Orsay).